A 424-amino-acid polypeptide reads, in one-letter code: Appressorium protein ROW1 (424 aa).

The N-terminal stretch at 1-21 (MTKLTLTVALVSALLASGASA) is a signal peptide. Disordered regions lie at residues 19-54 (ASAQ…WQPK), 69-90 (ANRI…GYNT), 278-304 (SGST…CSSV), and 327-398 (SSSA…TQGA). At 22–403 (QQPTGTGNGP…NTQGAASSAS (382 aa)) the chain is on the extracellular side. Over residues 37–54 (TDLNRNQPTKSWTQWQPK) the composition is skewed to polar residues. Composition is skewed to low complexity over residues 295-304 (APSSSQCSSV) and 327-347 (SSSA…SASS). The span at 362–382 (SGTGSGSGSGSGSGSGSGSGS) shows a compositional bias: gly residues. A compositionally biased stretch (low complexity) spans 383–398 (SSGSSSSGSSSNTQGA). Residues 404-424 (SLTISVGLAGLVAIGAAAFAL) traverse the membrane as a helical segment.

It localises to the cell membrane. It is found in the secreted. Functionally, plays a role in the formation of the appressorium, a specialized infection structure with the purpose of penetrating the host surface, and is required for proper remodeling of the appressorium wall and vesicle secretion. The chain is Appressorium protein ROW1 from Mycosarcoma maydis (Corn smut fungus).